We begin with the raw amino-acid sequence, 575 residues long: Estrogen receptor beta (575 aa).

The modulating stretch occupies residues 1-160 (MSSSLSPTLQ…GAVVKRDMHF (160 aa)). A disordered region spans residues 108–151 (DTKPHTSGRHSSFLSRPKLFGKRPEDGDGDEALDDDDPSSSSSG). The segment covering 134 to 145 (GDGDEALDDDDP) has biased composition (acidic residues). NR C4-type zinc fingers lie at residues 161–181 (CVVC…CEGC) and 197–221 (CPAT…LRKC). The segment at residues 161-226 (CVVCHDYASG…RLRKCYEMGM (66 aa)) is a DNA-binding region (nuclear receptor). The region spanning 290-526 (SPEQLVYCIL…DLLLEMLDAN (237 aa)) is the NR LBD domain. The span at 537–549 (VCTDPVTPATSPN) shows a compositional bias: polar residues. The disordered stretch occupies residues 537-557 (VCTDPVTPATSPNTPLPPQLH).

The protein belongs to the nuclear hormone receptor family. NR3 subfamily. In terms of assembly, binds DNA as a homodimer. Can form a heterodimer with ER-alpha. In terms of tissue distribution, ovary and testis.

The protein resides in the nucleus. Binds estrogens with an affinity similar to that of ER-alpha, and activates expression of reporter genes containing estrogen response elements (ERE) in an estrogen-dependent manner. This chain is Estrogen receptor beta (esr2), found in Ictalurus punctatus (Channel catfish).